We begin with the raw amino-acid sequence, 463 residues long: MQSMTIFNIITQLVFLSKTLNGNLSVQPVFQTLDGYEYTSQSFSQNLQSESQLEIVYEWKYLDFLYSTFVQRQQSILNGDFVPKNNLPLGIDVHNNRLFVTTPRWKNGVPASLGTLPFPPKESSPAIKPYPNWEAHGNPNNPDCSKLMSVYRTAVDRCDRIWLIDSGIVNATINLNQICPPKIVVYDLKSDELIVRYNLEASHVKQDSLHSNIVVDIGEDCDDAHAIVSDVWRFGLLVYSLSKNRSWRVTNYNFYPDPFASDFNVYGLNFQWLDGVFGMSIYYNKKIMERVLYFHPMASFKEFMVPMNILLNESVWQTNTQEYAKYFIPIGDRGYNSQSSTSGVTRNGIMFFTQVHQDDIGCWDTSKPYTRAHLGKFHNMENSNLIQFPNDLKVDKEKDQNVWLISNRLPIFLYSNLDYGEVNFRILKANVNKIIRNSVCNPDNSYINTSKSAFVLIEEGQCF.

This sequence belongs to the major royal jelly protein family.

It localises to the secreted. It carries out the reaction dopaminechrome = 5,6-dihydroxyindole. The protein operates within pigment biosynthesis; melanin biosynthesis. In terms of biological role, catalyzes the conversion of dopaminechrome to 5,6-dihydroxyindole in the eumelanin biosynthetic pathway originating from dopamine. Catalyzes tautomerization of dopaminechrome to 5,6-dihydroxyindole during eumelanin biosynthesis. Acts both dopaminechrome and N-methyl dopaminechrome but not on dopachrome or other aminochromes tested. The protein is Dopaminechrome tautomerase of Drosophila melanogaster (Fruit fly).